The sequence spans 169 residues: Aspartic protease inhibitor 3 (169 aa).

Residue asparagine 1 is glycosylated (N-linked (GlcNAc...) asparagine). 2 cysteine pairs are disulfide-bonded: cysteine 30/cysteine 75 and cysteine 124/cysteine 134.

The protein belongs to the protease inhibitor I3 (leguminous Kunitz-type inhibitor) family.

It localises to the vacuole. Its function is as follows. Inhibitor of cathepsin D (aspartic protease). May also inhibit trypsin and chymotrypsin (serine proteases). Protects the plant by inhibiting proteases of invading organisms. The polypeptide is Aspartic protease inhibitor 3 (Solanum tuberosum (Potato)).